Consider the following 308-residue polypeptide: Tyrosine recombinase XerC (308 aa).

In terms of domain architecture, Core-binding (CB) spans 20-101; the sequence is SKLHTLIDDF…SVKAFSSWAQ (82 aa). The Tyr recombinase domain occupies 122–302; sequence DLPKILGEQQ…SNKRLLEAFN (181 aa). Active-site residues include Arg-163, Lys-187, His-254, Arg-257, and His-280. Residue Tyr-289 is the O-(3'-phospho-DNA)-tyrosine intermediate of the active site.

Belongs to the 'phage' integrase family. XerC subfamily. Forms a cyclic heterotetrameric complex composed of two molecules of XerC and two molecules of XerD.

The protein localises to the cytoplasm. Its function is as follows. Site-specific tyrosine recombinase, which acts by catalyzing the cutting and rejoining of the recombining DNA molecules. The XerC-XerD complex is essential to convert dimers of the bacterial chromosome into monomers to permit their segregation at cell division. It also contributes to the segregational stability of plasmids. The polypeptide is Tyrosine recombinase XerC (Corynebacterium glutamicum (strain ATCC 13032 / DSM 20300 / JCM 1318 / BCRC 11384 / CCUG 27702 / LMG 3730 / NBRC 12168 / NCIMB 10025 / NRRL B-2784 / 534)).